We begin with the raw amino-acid sequence, 927 residues long: GPI inositol-deacylase (927 aa).

The Cytoplasmic portion of the chain corresponds to 1-4; the sequence is MNPL. Residues 5–25 form a helical membrane-spanning segment; that stretch reads SAVFNSVVLVLLALGVTDVFF. The Lumenal portion of the chain corresponds to 26-595; the sequence is SYESSRCSMT…QIVRFHGIYL (570 aa). 2 N-linked (GlcNAc...) asparagine glycosylation sites follow: N75 and N155. S169 is a catalytic residue. Residues N230, N362, N397, N432, N444, and N482 are each glycosylated (N-linked (GlcNAc...) asparagine). A helical transmembrane segment spans residues 596 to 616; the sequence is PVYIVANLLLAYGAQLHSILI. Residues 617 to 672 are Cytoplasmic-facing; that stretch reads QGSCMDLDLSFDVAAKPYKVDPVLIICKYLLNYKWFKNYWDGLMLPQLDAVQLHAY. The helical transmembrane segment at 673-693 threads the bilayer; it reads GFWFPLASLFFFIFGTSIAYW. The Lumenal segment spans residues 694 to 733; it reads SSIGLQAAVRILSSLWIYLKRPSMFPKESKCITYRVYAET. The chain crosses the membrane as a helical span at residues 734–754; it reads LFFAFISWRSCGTFSLLLVFL. Residues 755–821 are Cytoplasmic-facing; it reads RYLSKVLILY…KALDDCLKMH (67 aa). Residues 822-842 traverse the membrane as a helical segment; the sequence is FTILHLNLWIVLLGLPSFIYW. At 843–858 the chain is on the lumenal side; the sequence is LKTLRYTIQLDPDPNR. A helical transmembrane segment spans residues 859–879; it reads VSALVLIFILEILMNSTTSAI. At 880-887 the chain is on the cytoplasmic side; the sequence is KSSVCLKT. Residues 888 to 908 form a helical membrane-spanning segment; sequence AAVLQLPLSIIVVAFGTLHLY. Topologically, residues 909–927 are lumenal; that stretch reads RISNLIAFSLFLHVVCCFV.

The protein belongs to the GPI inositol-deacylase family.

The protein localises to the endoplasmic reticulum membrane. In terms of biological role, GPI inositol-deacylase that catalyzes the remove of the acyl chain linked to the 2-OH position of inositol ring from the GPI-anchored protein (GPI-AP) in the endoplasmic reticulum. Initiates the post-attachment remodeling phase of GPI-AP biogenesis and participates in endoplasmic reticulum (ER)-to-Golgi transport of GPI-anchored protein. The protein is GPI inositol-deacylase of Xenopus laevis (African clawed frog).